Consider the following 269-residue polypeptide: Transmembrane protein 41B (269 aa).

A run of 6 helical transmembrane segments spans residues 30-50 (TSLL…FLVY), 87-107 (FYVQ…TFAI), 125-147 (LALF…LSYL), 175-195 (LINY…FINI), 203-223 (PLKV…FVAI), and 240-260 (SWNS…PALF). The interval 118 to 229 (GFLYPFPLAL…FVAIKAGTTL (112 aa)) is VTT domain; required for its function in autophagy.

This sequence belongs to the TMEM41 family.

It localises to the endoplasmic reticulum membrane. Its subcellular location is the endomembrane system. The catalysed reaction is a 1,2-diacyl-sn-glycero-3-phospho-L-serine(in) = a 1,2-diacyl-sn-glycero-3-phospho-L-serine(out). The enzyme catalyses cholesterol(in) = cholesterol(out). It carries out the reaction a 1,2-diacyl-sn-glycero-3-phosphocholine(in) = a 1,2-diacyl-sn-glycero-3-phosphocholine(out). It catalyses the reaction a 1,2-diacyl-sn-glycero-3-phosphoethanolamine(in) = a 1,2-diacyl-sn-glycero-3-phosphoethanolamine(out). In terms of biological role, phospholipid scramblase involved in lipid homeostasis and membrane dynamics processes. Has phospholipid scramblase activity toward cholesterol and phosphatidylserine, as well as phosphatidylethanolamine and phosphatidylcholine. Required for autophagosome formation: participates in early stages of autophagosome biogenesis at the endoplasmic reticulum (ER) membrane by reequilibrating the leaflets of the ER as lipids are extracted by ATG2 (ATG2A or ATG2B) to mediate autophagosome assembly. In addition to autophagy, involved in other processes in which phospholipid scramblase activity is required. Required for normal motor neuron development. This chain is Transmembrane protein 41B, found in Gallus gallus (Chicken).